The primary structure comprises 204 residues: Probable calcium-binding protein CML46 (204 aa).

EF-hand domains follow at residues 72-106, 132-167, and 170-204; these read LEFQ…LGLS, PSLE…LGLK, and SNLE…NNFC. Ca(2+) contacts are provided by Asp-145, Asn-147, Asp-149, and Asp-156.

In terms of biological role, potential calcium sensor. The polypeptide is Probable calcium-binding protein CML46 (Arabidopsis thaliana (Mouse-ear cress)).